Here is a 139-residue protein sequence, read N- to C-terminus: Transcription antitermination protein NusB (139 aa).

This sequence belongs to the NusB family.

In terms of biological role, involved in transcription antitermination. Required for transcription of ribosomal RNA (rRNA) genes. Binds specifically to the boxA antiterminator sequence of the ribosomal RNA (rrn) operons. The chain is Transcription antitermination protein NusB from Enterobacter sp. (strain 638).